Consider the following 419-residue polypeptide: Light-independent protochlorophyllide reductase subunit N (419 aa).

Residues Cys17, Cys42, and Cys103 each coordinate [4Fe-4S] cluster.

The protein belongs to the BchN/ChlN family. As to quaternary structure, protochlorophyllide reductase is composed of three subunits; ChlL, ChlN and ChlB. Forms a heterotetramer of two ChlB and two ChlN subunits. Requires [4Fe-4S] cluster as cofactor.

It carries out the reaction chlorophyllide a + oxidized 2[4Fe-4S]-[ferredoxin] + 2 ADP + 2 phosphate = protochlorophyllide a + reduced 2[4Fe-4S]-[ferredoxin] + 2 ATP + 2 H2O. The protein operates within porphyrin-containing compound metabolism; chlorophyll biosynthesis (light-independent). Its function is as follows. Component of the dark-operative protochlorophyllide reductase (DPOR) that uses Mg-ATP and reduced ferredoxin to reduce ring D of protochlorophyllide (Pchlide) to form chlorophyllide a (Chlide). This reaction is light-independent. The NB-protein (ChlN-ChlB) is the catalytic component of the complex. The sequence is that of Light-independent protochlorophyllide reductase subunit N from Prochlorococcus marinus (strain NATL1A).